The sequence spans 75 residues: Protein Tlp homolog (75 aa).

It belongs to the Tlp family.

This Clostridium acetobutylicum (strain ATCC 824 / DSM 792 / JCM 1419 / IAM 19013 / LMG 5710 / NBRC 13948 / NRRL B-527 / VKM B-1787 / 2291 / W) protein is Protein Tlp homolog.